A 242-amino-acid polypeptide reads, in one-letter code: MLLGVNIDHIATVRNARGTTYPSPVEAALVAETHGADLITMHLREDRRHIKDADVFAVKNAIRTRLNLEMALTEEMLENALKVMPEDVCIVPEKRQEITTEGGLDVLAQQEKIAGFTKILTDAGIRVSLFIDADDRQIQAAYDVGAPVVELHTGAYADARSHAEQLKQFERLQNGAHFAGDLGLVVNAGHGLTIHNVTPIAQILAIRELNIGHSLIAQALFLGLPEAVRQMKEAMFRARLLP.

Asparagine 6 provides a ligand contact to 3-amino-2-oxopropyl phosphate. A 1-deoxy-D-xylulose 5-phosphate-binding site is contributed by 8–9 (DH). Arginine 17 is a binding site for 3-amino-2-oxopropyl phosphate. Residue histidine 42 is the Proton acceptor of the active site. Positions 44 and 49 each coordinate 1-deoxy-D-xylulose 5-phosphate. Glutamate 69 functions as the Proton acceptor in the catalytic mechanism. Threonine 99 serves as a coordination point for 1-deoxy-D-xylulose 5-phosphate. Residue histidine 190 is the Proton donor of the active site. Residues glycine 191 and 212-213 (GH) contribute to the 3-amino-2-oxopropyl phosphate site.

The protein belongs to the PNP synthase family. As to quaternary structure, homooctamer; tetramer of dimers.

The protein localises to the cytoplasm. It carries out the reaction 3-amino-2-oxopropyl phosphate + 1-deoxy-D-xylulose 5-phosphate = pyridoxine 5'-phosphate + phosphate + 2 H2O + H(+). It functions in the pathway cofactor biosynthesis; pyridoxine 5'-phosphate biosynthesis; pyridoxine 5'-phosphate from D-erythrose 4-phosphate: step 5/5. Functionally, catalyzes the complicated ring closure reaction between the two acyclic compounds 1-deoxy-D-xylulose-5-phosphate (DXP) and 3-amino-2-oxopropyl phosphate (1-amino-acetone-3-phosphate or AAP) to form pyridoxine 5'-phosphate (PNP) and inorganic phosphate. The chain is Pyridoxine 5'-phosphate synthase from Neisseria meningitidis serogroup C.